Here is a 107-residue protein sequence, read N- to C-terminus: Heme-degrading monooxygenase (107 aa).

Residues 2-94 form the ABM domain; sequence IIVTNTAKIT…YILDNKIAYY (93 aa). Fe cation is bound at residue N6. H76 contributes to the heme binding site.

It belongs to the antibiotic biosynthesis monooxygenase family. Heme-degrading monooxygenase IsdG subfamily. Homodimer.

The protein resides in the cytoplasm. The enzyme catalyses heme b + 3 reduced [NADPH--hemoprotein reductase] + 3 O2 = biliverdin IXalpha + CO + Fe(2+) + 3 oxidized [NADPH--hemoprotein reductase] + 3 H2O + H(+). Allows bacterial pathogens to use the host heme as an iron source. Catalyzes the oxidative degradation of the heme macrocyclic porphyrin ring to the biliverdin in the presence of a suitable electron donor such as ascorbate or NADPH--cytochrome P450 reductase, with subsequent release of free iron. This Bacillus cereus (strain ATCC 14579 / DSM 31 / CCUG 7414 / JCM 2152 / NBRC 15305 / NCIMB 9373 / NCTC 2599 / NRRL B-3711) protein is Heme-degrading monooxygenase.